Consider the following 247-residue polypeptide: DASH complex subunit DUO1 (247 aa).

Ser2 is subject to N-acetylserine. Disordered regions lie at residues 27 to 47 and 172 to 247; these read LNNTTNKFPKSTGGGASDNIS and NRKG…KMFR. A coiled-coil region spans residues 152–180; it reads LHNVIALKKKEILDLRQKLENRKGEKDAA. Polar residues predominate over residues 232 to 247; sequence NRWTKPTASSSRKMFR.

Belongs to the DASH complex DUO1 family. In terms of assembly, component of the DASH complex consisting of ASK1, DAD1, DAD2, DAD3, DAD4, DAM1, DUO1, HSK3, SPC19 and SPC34, with a stoichiometry of one copy of each subunit per complex. Multiple DASH complexes oligomerize to form a ring that encircles spindle microtubules and organizes the rod-like NDC80 complexes of the outer kinetochore. DASH complex oligomerization strengthens microtubule attachments. On cytoplasmic microtubules, DASH complexes appear to form patches instead of rings. Within the complex, DAM1 and DUO1 may form the microtubule connections.

It is found in the nucleus. The protein resides in the cytoplasm. Its subcellular location is the cytoskeleton. The protein localises to the spindle pole. It localises to the chromosome. It is found in the centromere. The protein resides in the kinetochore. Its function is as follows. Component of the DASH complex that connects microtubules with kinetochores and couples microtubule depolymerisation to chromosome movement; it is involved in retrieving kinetochores to the spindle poles before their re-orientation on the spindle in early mitosis and allows microtubule depolymerization to pull chromosomes apart and resist detachment during anaphase. Kinetochores, consisting of a centromere-associated inner segment and a microtubule-contacting outer segment, play a crucial role in chromosome segregation by mediating the physical connection between centromeric DNA and microtubules. Kinetochores also serve as an input point for the spindle assembly checkpoint, which delays anaphase until all chromosomes have bioriented on the mitotic spindle. During spindle-kinetochore attachment, kinetochores first attach to the lateral surface of spindle microtubules, which supports the congression of chromosomes toward the middle of the dividing cell; they then slide along towards the spindle pole, a process independent of the DASH complex but requiring the NDC80 complex. When the end of a disassembling microtubule reaches the laterally attached kinetochore, the DASH complex together with the NDC80 complex and STU2 convert lateral attachment to end-on capture to produce a structure that can track with microtubule shortening and sustain attachment when tension is applied across sister kinetochores upon their biorientation. Microtubule depolymerization proceeds by protofilament splaying and induces the kinetochore-attached DASH complex to slide longitudinally, thereby helping to transduce depolymerization energy into pulling forces to disjoin chromatids. Incorrect microtubule attachments are corrected by releasing microubules from the kinetochore through phosphorylation by IPL1 of kinetochore components. Links the microtubule cytoskeleton to chromosomes during interphase. Also contributes to the poleward transport of kinetochores on microtubules following centromeric DNA replication in S-phase. In Saccharomyces cerevisiae (strain ATCC 204508 / S288c) (Baker's yeast), this protein is DASH complex subunit DUO1 (DUO1).